We begin with the raw amino-acid sequence, 585 residues long: Bifunctional purine biosynthesis protein ade10 (585 aa).

The MGS-like domain occupies 1 to 142 (MYALLSVYDK…KNHARVTILS (142 aa)). Residues 30-33 (SGGT), 60-63 (RVKT), 97-98 (CN), and 121-122 (DI) contribute to the IMP site. Residue lysine 133 is the Proton donor/acceptor; for FAICAR cyclization activity of the active site. 5-amino-1-(5-phospho-beta-D-ribosyl)imidazole-4-carboxamide-binding positions include 200–201 (RY), histidine 260, glycine 308, aspartate 331, asparagine 423, and arginine 443. The Proton acceptor; for AICAR formyltransferase activity role is filled by histidine 260. Isoleucine 444 is a (6R)-10-formyltetrahydrofolate binding site. Phenylalanine 534 is a binding site for 5-amino-1-(5-phospho-beta-D-ribosyl)imidazole-4-carboxamide. (6R)-10-formyltetrahydrofolate contacts are provided by residues aspartate 539 and 558-559 (SV). 5-amino-1-(5-phospho-beta-D-ribosyl)imidazole-4-carboxamide is bound at residue arginine 581.

This sequence belongs to the PurH family. In terms of assembly, homodimer.

Its subcellular location is the cytoplasm. The protein resides in the cytosol. The enzyme catalyses (6R)-10-formyltetrahydrofolate + 5-amino-1-(5-phospho-beta-D-ribosyl)imidazole-4-carboxamide = 5-formamido-1-(5-phospho-D-ribosyl)imidazole-4-carboxamide + (6S)-5,6,7,8-tetrahydrofolate. It catalyses the reaction IMP + H2O = 5-formamido-1-(5-phospho-D-ribosyl)imidazole-4-carboxamide. It functions in the pathway purine metabolism; IMP biosynthesis via de novo pathway; 5-formamido-1-(5-phospho-D-ribosyl)imidazole-4-carboxamide from 5-amino-1-(5-phospho-D-ribosyl)imidazole-4-carboxamide (10-formyl THF route): step 1/1. Its pathway is purine metabolism; IMP biosynthesis via de novo pathway; IMP from 5-formamido-1-(5-phospho-D-ribosyl)imidazole-4-carboxamide: step 1/1. Bifunctional enzyme that catalyzes the last two steps of purine biosynthesis. Acts as a transformylase that incorporates a formyl group to the AMP analog AICAR (5-amino-1-(5-phospho-beta-D-ribosyl)imidazole-4-carboxamide) to produce the intermediate formyl-AICAR (FAICAR). Also catalyzes the cyclization of FAICAR to IMP. The sequence is that of Bifunctional purine biosynthesis protein ade10 (ade10) from Schizosaccharomyces pombe (strain 972 / ATCC 24843) (Fission yeast).